Consider the following 420-residue polypeptide: Glucose-1-phosphate adenylyltransferase (420 aa).

Alpha-D-glucose 1-phosphate-binding positions include tyrosine 107, glycine 173, 188–189 (EK), and serine 206.

The protein belongs to the bacterial/plant glucose-1-phosphate adenylyltransferase family. As to quaternary structure, homotetramer.

The catalysed reaction is alpha-D-glucose 1-phosphate + ATP + H(+) = ADP-alpha-D-glucose + diphosphate. It functions in the pathway glycan biosynthesis; glycogen biosynthesis. Functionally, involved in the biosynthesis of ADP-glucose, a building block required for the elongation reactions to produce glycogen. Catalyzes the reaction between ATP and alpha-D-glucose 1-phosphate (G1P) to produce pyrophosphate and ADP-Glc. The protein is Glucose-1-phosphate adenylyltransferase of Shewanella sp. (strain ANA-3).